We begin with the raw amino-acid sequence, 250 residues long: Ribonuclease PH (250 aa).

Phosphate contacts are provided by residues Arg-86 and 124-126 (GTR).

The protein belongs to the RNase PH family. Homohexameric ring arranged as a trimer of dimers.

The enzyme catalyses tRNA(n+1) + phosphate = tRNA(n) + a ribonucleoside 5'-diphosphate. Phosphorolytic 3'-5' exoribonuclease that plays an important role in tRNA 3'-end maturation. Removes nucleotide residues following the 3'-CCA terminus of tRNAs; can also add nucleotides to the ends of RNA molecules by using nucleoside diphosphates as substrates, but this may not be physiologically important. Probably plays a role in initiation of 16S rRNA degradation (leading to ribosome degradation) during starvation. This Shouchella clausii (strain KSM-K16) (Alkalihalobacillus clausii) protein is Ribonuclease PH.